The chain runs to 840 residues: Probable sulfate permease C869.05c (840 aa).

12 helical membrane passes run 120–140 (WLINDLIAGITVGCVVVPQGM), 148–168 (LPSEYGLYSSFVGVAIYCFFA), 173–193 (VSIGPVAVMSLITAKVIANVM), 208–228 (LALLAGAITCGIGLLRLGFII), 230–250 (FIPVPAVAGFTTGSALNILSG), 278–298 (LPDTTVDAAFGLVSLFILFFT), 315–335 (AFFLTNTLRSAVVVIVGTAIS), 410–430 (LIAMGVTNLIGIFFNAYPATG), 447–467 (IAGIFTAAVVILSLYCLTDAF), 470–490 (IPNAILSAVIIHAVTDLILPM), 505–525 (CIFFISVIVSVFSSIENGIYV), and 527–547 (VCLAAALLLLRIAKPHGSFLG). In terms of domain architecture, STAS spans 578–733 (NLEIQSPPPG…CVEVAAPLRD (156 aa)). S823 is subject to Phosphoserine.

Belongs to the SLC26A/SulP transporter (TC 2.A.53) family.

The protein resides in the membrane. High affinity uptake of sulfate into the cell. This is Probable sulfate permease C869.05c from Schizosaccharomyces pombe (strain 972 / ATCC 24843) (Fission yeast).